The following is a 157-amino-acid chain: Transcription elongation factor GreA (157 aa).

It belongs to the GreA/GreB family.

In terms of biological role, necessary for efficient RNA polymerase transcription elongation past template-encoded arresting sites. The arresting sites in DNA have the property of trapping a certain fraction of elongating RNA polymerases that pass through, resulting in locked ternary complexes. Cleavage of the nascent transcript by cleavage factors such as GreA or GreB allows the resumption of elongation from the new 3'terminus. GreA releases sequences of 2 to 3 nucleotides. The protein is Transcription elongation factor GreA of Hyphomonas neptunium (strain ATCC 15444).